Reading from the N-terminus, the 340-residue chain is Polyporopepsin (340 aa).

Residues 14–330 (YVVNVGVGSP…DTTNKRLGLA (317 aa)) enclose the Peptidase A1 domain. The active site involves D32. N192 is a glycosylation site (N-linked (GlcNAc...) asparagine). D212 is an active-site residue. The N-linked (GlcNAc...) asparagine glycan is linked to N238.

The protein belongs to the peptidase A1 family.

It carries out the reaction Milk clotting activity, broad specificity, but fails to cleave 15-Leu-|-Tyr-16 or 16-Tyr-|-Leu-17 of insulin B chain.. The sequence is that of Polyporopepsin from Irpex lacteus (Milk-white toothed polypore).